Reading from the N-terminus, the 358-residue chain is WAT1-related protein At3g28080 (358 aa).

10 consecutive transmembrane segments (helical) span residues 12-32, 42-62, 81-101, 105-125, 137-157, 187-207, 219-239, 245-265, 283-303, and 308-328; these read AVFLTAMLAGETSIVGLSTLF, IYPFLSYSYLLASLLLLPSLF, IGLLGFLGSMYVITGGIGIEY, TLASAIGNIVPALTFILAVIF, SVAKVMGTILSLIGAFVVIFY, WLIGGAILTIQGIFVSVSFIL, FTVSILYILCISIVTSMIGLV, PSIWIIHFDITLFTIVTTGII, LYLAIFKPLSILIAVVMGTIF, and LYLGCLIGGILITLGFYVVMW. Positions 27–155 constitute an EamA domain; the sequence is GLSTLFKVAT…LSLIGAFVVI (129 aa).

Belongs to the drug/metabolite transporter (DMT) superfamily. Plant drug/metabolite exporter (P-DME) (TC 2.A.7.4) family.

The protein localises to the membrane. This Arabidopsis thaliana (Mouse-ear cress) protein is WAT1-related protein At3g28080.